A 172-amino-acid polypeptide reads, in one-letter code: Protein GrpE (172 aa).

This sequence belongs to the GrpE family. As to quaternary structure, homodimer.

The protein localises to the cytoplasm. Its function is as follows. Participates actively in the response to hyperosmotic and heat shock by preventing the aggregation of stress-denatured proteins, in association with DnaK and GrpE. It is the nucleotide exchange factor for DnaK and may function as a thermosensor. Unfolded proteins bind initially to DnaJ; upon interaction with the DnaJ-bound protein, DnaK hydrolyzes its bound ATP, resulting in the formation of a stable complex. GrpE releases ADP from DnaK; ATP binding to DnaK triggers the release of the substrate protein, thus completing the reaction cycle. Several rounds of ATP-dependent interactions between DnaJ, DnaK and GrpE are required for fully efficient folding. This Thermotoga maritima (strain ATCC 43589 / DSM 3109 / JCM 10099 / NBRC 100826 / MSB8) protein is Protein GrpE.